The sequence spans 90 residues: Small ribosomal subunit protein uS15c (90 aa).

This sequence belongs to the universal ribosomal protein uS15 family. In terms of assembly, part of the 30S ribosomal subunit.

The protein localises to the plastid. It is found in the chloroplast. The chain is Small ribosomal subunit protein uS15c (rps15) from Dioscorea elephantipes (Elephant's foot yam).